Here is a 186-residue protein sequence, read N- to C-terminus: Ribosome-recycling factor (186 aa).

This sequence belongs to the RRF family.

It is found in the cytoplasm. Functionally, responsible for the release of ribosomes from messenger RNA at the termination of protein biosynthesis. May increase the efficiency of translation by recycling ribosomes from one round of translation to another. In Polaromonas naphthalenivorans (strain CJ2), this protein is Ribosome-recycling factor.